The following is a 2210-amino-acid chain: RNA-directed RNA polymerase L (2210 aa).

The tract at residues 26 to 285 (KAIFLSQTKL…KCAIMSEEDS (260 aa)) is endonuclease. Mn(2+) is bound by residues Glu-51, Asp-88, and Glu-101. Lys-114 is an active-site residue. The RdRp catalytic domain occupies 1163-1359 (LDMKSVVRQG…FLSDKLNKFV (197 aa)). Asp-1319 contributes to the Mg(2+) binding site.

This sequence belongs to the Bunyavirales RNA polymerase family. Homomultimer; the oligomeric structure is essential for the polymerase activity. Interacts with nucleoprotein N. Interacts with protein Z; this interaction inhibits viral transcription and replication, Z partially blocks the product exit tunnel for the releasing nascent RNA product. It depends on Mn(2+) as a cofactor. Requires Mg(2+) as cofactor.

It localises to the virion. The protein localises to the host cytoplasm. The enzyme catalyses RNA(n) + a ribonucleoside 5'-triphosphate = RNA(n+1) + diphosphate. Its function is as follows. RNA-dependent RNA polymerase, which is responsible for the replication and transcription of the viral RNA genome using antigenomic RNA as an intermediate. During transcription, synthesizes subgenomic RNAs and assures their capping by a cap-snatching mechanism, which involves the endonuclease activity cleaving the host capped pre-mRNAs. These short capped RNAs are then used as primers for viral transcription. The 3'-end of subgenomic mRNAs molecules are heterogeneous and not polyadenylated. The replicase function is to direct synthesis of antigenomic and genomic RNA which are encapsidated and non capped. As a consequence of the use of the same enzyme for both transcription and replication, these mechanisms need to be well coordinated. These processes may be regulated by proteins N and Z in a dose-dependent manner. Z protein inhibits the viral polymerase L und thus the viral transcription and RNA synthesis. The protein is RNA-directed RNA polymerase L of Sigmodon alstoni (PIRV).